Here is a 151-residue protein sequence, read N- to C-terminus: Ribosome maturation factor RimP (151 aa).

The protein belongs to the RimP family.

Its subcellular location is the cytoplasm. In terms of biological role, required for maturation of 30S ribosomal subunits. In Shewanella sediminis (strain HAW-EB3), this protein is Ribosome maturation factor RimP.